Here is a 568-residue protein sequence, read N- to C-terminus: Alpha-1,3-galactosidase A (568 aa).

The N-terminal stretch at 1-17 is a signal peptide; the sequence is MMSVWFIQLAIFAQSRI. PbH1 repeat units follow at residues 87 to 125, 243 to 265, 299 to 321, 409 to 431, 432 to 454, and 465 to 486; these read LYLN…VLKN, SKGI…VCQY, RGMI…NIHG, TPEV…LITT, RRKS…FVAD, and VHDL…ISID.

The protein belongs to the glycosyl hydrolase 110 family. A subfamily.

It catalyses the reaction Hydrolysis of terminal, non-reducing branched (1-&gt;3)-alpha-D-galactosidic residues, producing free D-galactose.. It carries out the reaction Hydrolysis of terminal, non-reducing alpha-D-galactose residues in alpha-D-galactosides, including galactose oligosaccharides, galactomannans and galactolipids.. In terms of biological role, alpha-galactosidase that specifically removes branched alpha-1,3-linked galactose residues present in blood group B antigens. Has no activity toward linear alpha-1,3-linked galactose residues. The protein is Alpha-1,3-galactosidase A (glaA) of Bacteroides thetaiotaomicron (strain ATCC 29148 / DSM 2079 / JCM 5827 / CCUG 10774 / NCTC 10582 / VPI-5482 / E50).